The sequence spans 273 residues: MKKTVTAVALLCALSSTAIAPTFAADDDEAARLKAIEEYRKQIADGNPSDLLAMEGEELWRTPYGPKNQSLEQCDLGLGPGVVKGAAAKLPRYFPDTGKVEDLESRLMTCMERLQGVERQKVIDSPWRKGEKLRMDKIVAYIVTESNGEKIDVDMSHPKMKEMYELGKRMFFYRTGPFDFSCATCHGKDGQRIRLQELPNLTKHEGAAAGWGSWPAYRVSNSQFWTMQMRLNDCFRQQRTAEPIYGSDATIALSVYMAANGNGGVMLTPGIKR.

The N-terminal stretch at 1 to 24 (MKKTVTAVALLCALSSTAIAPTFA) is a signal peptide. A disulfide bridge connects residues C74 and C110. In terms of domain architecture, Cytochrome c spans 162–273 (EMYELGKRMF…GVMLTPGIKR (112 aa)). Heme is bound by residues C182 and H186. Substrate is bound at residue R230. C234 is a binding site for heme. The active-site Cysteine persulfide intermediate is C234.

This sequence belongs to the SoxA family. Heterodimer of SoxA and SoxX. Requires heme as cofactor. Post-translationally, cysteine persulfide at Cys-234.

The protein resides in the periplasm. It carries out the reaction L-cysteinyl-[SoxY protein] + thiosulfate + 2 Fe(III)-[cytochrome c] = S-sulfosulfanyl-L-cysteinyl-[SoxY protein] + 2 Fe(II)-[cytochrome c] + 2 H(+). The enzyme catalyses S-sulfanyl-L-cysteinyl-[SoxY protein] + thiosulfate + 2 Fe(III)-[cytochrome c] = S-(2-sulfodisulfanyl)-L-cysteinyl-[SoxY protein] + 2 Fe(II)-[cytochrome c] + 2 H(+). Its function is as follows. C-type monoheme cytochrome, which is part of the SoxAX cytochrome complex involved in sulfur oxidation. The SoxAX complex catalyzes the formation of a heterodisulfide bond between the conserved cysteine residue on a sulfur carrier SoxYZ complex subunit SoxY and thiosulfate or other inorganic sulfur substrates. This leads to the liberation of two electrons, which may be transferred from the SoxAX complex to another cytochrome c that then channels them into the respiratory electron transport chain. Some electrons may be used for reductive CO(2) fixation. The chain is L-cysteine S-thiosulfotransferase subunit SoxA from Hydrogenophilus thermoluteolus (Pseudomonas hydrogenothermophila).